Here is a 512-residue protein sequence, read N- to C-terminus: Cytochrome P450 monooxygenase TwmD (512 aa).

Cysteine 454 lines the heme pocket.

Belongs to the cytochrome P450 family. The cofactor is heme.

Its pathway is secondary metabolite biosynthesis. Functionally, cytochrome P450 monooxygenase; part of the gene cluster that mediates the biosynthesis of wortmanamides A and B, reduced long-chain polyketides amidated with a specific omega-amino acid, 5-aminopentanoic acid (5PA). The PKS modules of TwmB are involved in the synthesis of the polyketide backbone, whereas the non-canonical C domain of TwmB is a bonafide condensation domain that specifically selects 5PA and catalyzes amidation to release polyketide chain. The C domain clearly prefers C16 and C18 fatty acyl substrates, which is consistent with simultaneous formation of both octaketide and nonaketide acyl amides wortmanamides A and B. Because TwmB lacks a designated enoylreductase (ER) domain, the required activity is provided the enoyl reductase TwmE. The roles of the remaining enzymes have still to be clarified. The chain is Cytochrome P450 monooxygenase TwmD from Talaromyces wortmannii (Penicillium wortmannii).